The chain runs to 295 residues: Keratin-like protein KRT222 (295 aa).

In terms of domain architecture, IF rod spans 1-150; it reads MELSQLLNEI…HLLEKEEIRY (150 aa). The stretch at 2–150 forms a coiled coil; sequence ELSQLLNEIR…HLLEKEEIRY (149 aa).

It belongs to the intermediate filament family.

This Homo sapiens (Human) protein is Keratin-like protein KRT222 (KRT222).